We begin with the raw amino-acid sequence, 448 residues long: Maltoporin (448 aa).

The signal sequence occupies residues 1 to 25; that stretch reads MMITLRKLPLAVAVMAGIFAAQASA.

This sequence belongs to the porin LamB (TC 1.B.3) family. As to quaternary structure, homotrimer formed of three 18-stranded antiparallel beta-barrels, containing three independent channels.

It localises to the cell outer membrane. The catalysed reaction is beta-maltose(in) = beta-maltose(out). Its function is as follows. Involved in the transport of maltose and maltodextrins. The chain is Maltoporin from Cronobacter sakazakii (strain ATCC BAA-894) (Enterobacter sakazakii).